Reading from the N-terminus, the 1023-residue chain is 2-oxoglutarate dehydrogenase complex component E1 (1023 aa).

The N-terminal 40 residues, 1 to 40, are a transit peptide targeting the mitochondrion; it reads MFHLRTCAAKLRPLTASQTVKTFSQNKPAAIRTFQQIRCY. An N6-succinyllysine modification is found at Lys74. Ser100 bears the Phosphoserine mark. 3 residues coordinate Ca(2+): His143, Asp156, and Asp158. Arg312 is a thiamine diphosphate binding site. Lys401 is modified (N6-acetyllysine). Thiamine diphosphate-binding residues include Asp411, Asn444, and Ile446. Residues Asp411, Asn444, and Ile446 each contribute to the Mg(2+) site. Lys534 is covalently cross-linked (Glycyl lysine isopeptide (Lys-Gly) (interchain with G-Cter in ubiquitin)). Lys564 carries the N6-succinyllysine modification. Gln676 lines the thiamine diphosphate pocket. The interval 933 to 939 is recognized by alloreactive CD8 cytotoxic T-lymphocytes in association with a class I MHC protein; the sequence is LSPFPFD. Position 970 is an N6-acetyllysine (Lys970).

This sequence belongs to the alpha-ketoglutarate dehydrogenase family. As to quaternary structure, homodimer. The 2-oxoglutarate dehydrogenase complex is composed of OGDH (2-oxoglutarate dehydrogenase; E1), DLST (dihydrolipoamide succinyltransferase; E2), DLD (dihydrolipoamide dehydrogenase; E3) and the assembly factor KGD4. It contains multiple copies of the three enzymatic components (E1, E2 and E3). In the nucleus, the 2-oxoglutarate dehydrogenase complex associates with KAT2A. Interacts with ABHD11; this interaction maintains the functional lipoylation of the 2-oxoglutarate dehydrogenase complex. It depends on thiamine diphosphate as a cofactor. Mg(2+) is required as a cofactor.

It is found in the mitochondrion. The protein resides in the nucleus. The catalysed reaction is N(6)-[(R)-lipoyl]-L-lysyl-[protein] + 2-oxoglutarate + H(+) = N(6)-[(R)-S(8)-succinyldihydrolipoyl]-L-lysyl-[protein] + CO2. Its activity is regulated as follows. Calcium ions and ADP stimulate, whereas ATP and NADH reduce catalytic activity. Its function is as follows. 2-oxoglutarate dehydrogenase (E1o) component of the 2-oxoglutarate dehydrogenase complex (OGDHC). Participates in the first step, rate limiting for the overall conversion of 2-oxoglutarate to succinyl-CoA and CO(2) catalyzed by the whole OGDHC. Catalyzes the irreversible decarboxylation of 2-oxoglutarate (alpha-ketoglutarate) via the thiamine diphosphate (ThDP) cofactor and subsequent transfer of the decarboxylated acyl intermediate on an oxidized dihydrolipoyl group that is covalently amidated to the E2 enzyme (dihydrolipoyllysine-residue succinyltransferase or DLST). Plays a key role in the Krebs (citric acid) cycle, which is a common pathway for oxidation of fuel molecules, including carbohydrates, fatty acids, and amino acids. Can catalyze the decarboxylation of 2-oxoadipate in vitro, but at a much lower rate than 2-oxoglutarate. Mainly active in the mitochondrion. A fraction of the 2-oxoglutarate dehydrogenase complex also localizes in the nucleus and is required for lysine succinylation of histones: associates with KAT2A on chromatin and provides succinyl-CoA to histone succinyltransferase KAT2A. The protein is 2-oxoglutarate dehydrogenase complex component E1 of Mus musculus (Mouse).